Reading from the N-terminus, the 310-residue chain is ATP-dependent protease (310 aa).

Positions 24–186 (RLNQCFFKFK…TPNQKEENYF (163 aa)) constitute an Integrase catalytic domain.

In Lactococcus lactis subsp. lactis (Streptococcus lactis), this protein is ATP-dependent protease.